A 263-amino-acid polypeptide reads, in one-letter code: Regulatory protein RecX (263 aa).

It belongs to the RecX family.

It is found in the cytoplasm. In terms of biological role, modulates RecA activity. This is Regulatory protein RecX from Bacillus velezensis (strain DSM 23117 / BGSC 10A6 / LMG 26770 / FZB42) (Bacillus amyloliquefaciens subsp. plantarum).